The chain runs to 636 residues: Golgin subfamily A member 8F (636 aa).

Disordered regions lie at residues 1 to 72 and 107 to 127; these read MAEE…SATL and NKQVEHQLEEEKKANNEKQKA. The span at 38–50 shows a compositional bias: polar residues; it reads TNGSIHETATSGG. Coiled-coil stretches lie at residues 93 to 148, 211 to 263, and 306 to 412; these read VSQL…LNTD, LEQS…MSQE, and EVEL…QQKQ. The segment covering 109–127 has biased composition (basic and acidic residues); sequence QVEHQLEEEKKANNEKQKA. 4 disordered regions span residues 344 to 364, 422 to 449, 496 to 537, and 588 to 612; these read LREQEERLQEQQERLPEQEER, ALPGEGDGGGHLDSEGEEAPRPIPSIPQ, PITK…GVAA, and PVQGEAREGSPHDNPTAQPIVQDHQ. A compositionally biased stretch (basic and acidic residues) spans 429-441; it reads GGGHLDSEGEEAP. Over residues 509 to 522 the composition is skewed to gly residues; sequence PGGGHHQAGPGQGG.

It belongs to the GOLGA8 family.

The sequence is that of Golgin subfamily A member 8F from Homo sapiens (Human).